Consider the following 243-residue polypeptide: Peptidyl-tRNA hydrolase (243 aa).

Tyr14 serves as a coordination point for tRNA. Residue His19 is the Proton acceptor of the active site. Residues Phe64, Asn66, and Asn112 each coordinate tRNA. Positions 188–243 (GGKAEEEKPRKDNKTTEKKPAGQSHIHQARNHNQPKVLTTGPMADILKKMFGNKGE) are disordered. Basic and acidic residues predominate over residues 190–207 (KAEEEKPRKDNKTTEKKP).

Belongs to the PTH family. In terms of assembly, monomer.

Its subcellular location is the cytoplasm. It carries out the reaction an N-acyl-L-alpha-aminoacyl-tRNA + H2O = an N-acyl-L-amino acid + a tRNA + H(+). Its function is as follows. Hydrolyzes ribosome-free peptidyl-tRNAs (with 1 or more amino acids incorporated), which drop off the ribosome during protein synthesis, or as a result of ribosome stalling. In terms of biological role, catalyzes the release of premature peptidyl moieties from peptidyl-tRNA molecules trapped in stalled 50S ribosomal subunits, and thus maintains levels of free tRNAs and 50S ribosomes. The sequence is that of Peptidyl-tRNA hydrolase from Rhizobium leguminosarum bv. trifolii (strain WSM2304).